We begin with the raw amino-acid sequence, 414 residues long: Protein FAM81B (414 aa).

Polar residues predominate over residues 1–13 (MTSETDINKSASP). Residues 1–43 (MTSETDINKSASPTAAAKEQPEEPDGPLPGSASEQEKKVRFSP) form a disordered region. Coiled-coil stretches lie at residues 70-94 (NTQR…LEQA), 121-149 (LLEN…QIKA), 188-223 (KLSG…NLDT), and 266-414 (LNLY…LQES).

Belongs to the FAM81 family.

This is Protein FAM81B (FAM81B) from Bos taurus (Bovine).